The sequence spans 303 residues: Growth/differentiation factor 15 (303 aa).

The N-terminal stretch at 1 to 30 is a signal peptide; it reads MALRALHAQPTGGPQLRFLLFLLLLLLLLS. Residues 31 to 188 constitute a propeptide that is removed on maturation; the sequence is WPSQGDALAL…LRSAAGRGRR (158 aa). N-linked (GlcNAc...) asparagine glycosylation occurs at Asn71. Intrachain disulfides connect Cys198–Cys205, Cys206–Cys269, Cys235–Cys300, and Cys239–Cys302.

It belongs to the TGF-beta family. Homodimer; disulfide-linked. Interacts with GFRAL and RET; ligand of GFRAL, which mediates GDF15 internalization and cellular signaling through interaction with RET via the formation of a 2:2:2 ternary complex composed of GDF15, GFRAL and RET. In terms of tissue distribution, detected in plasma (at protein level).

It localises to the secreted. Its function is as follows. Hormone produced in response to various stresses to confer information about those stresses to the brain, and trigger an aversive response, characterized by nausea and/or loss of appetite. The aversive response is both required to reduce continuing exposure to those stresses at the time of exposure and to promote avoidance behavior in the future. Acts by binding to its receptor, GFRAL, activating GFRAL-expressing neurons localized in the area postrema and nucleus tractus solitarius of the brainstem. It then triggers the activation of neurons localized within the parabrachial nucleus and central amygdala, which constitutes part of the 'emergency circuit' that shapes responses to stressful conditions. The GDF15-GFRAL signal induces expression of genes involved in metabolism, such as lipid metabolism in adipose tissues. Contributes to the effect of metformin, an anti-diabetic drug, on appetite reduction and weight loss: produced in the kidney in response to metformin treatment, thereby activating the GDF15-GFRAL response, leading to reduced appetite and weight. Required for avoidance behavior in response to food allergens: induced downstream of mast cell activation to promote aversion and minimize harmful effects of exposure to noxious substances. Produced in response to anticancer drugs, such as camptothecin or cisplatin, promoting nausea and contributing to malnutrition. Overproduced in many cancers, promoting anorexia in cancer (cachexia). Responsible for the risk of nausea during pregnancy: high levels of GDF15 during pregnancy, mostly originating from embryos, are associated with increased nausea. Maternal sensitivity to nausea is probably determined by pre-pregnancy exposure to GDF15, females with naturally high level of GDF15 being less susceptible to nausea than female rats with low levels of GDF15 before pregnancy. Promotes metabolic adaptation in response to systemic inflammation caused by bacterial and viral infections in order to promote tissue tolerance and prevent tissue damage. Required for tissue tolerance in response to myocardial infarction by acting as an inhibitor of leukocyte integring activation, thereby protecting against cardiac rupture. Inhibits growth hormone signaling on hepatocytes. In Rattus norvegicus (Rat), this protein is Growth/differentiation factor 15.